Consider the following 405-residue polypeptide: Phosphoglycerate kinase (405 aa).

Substrate-binding positions include 24-26, R40, 63-66, R122, and R162; these read DFN and HLGR. Residues K212, E331, and 361–364 contribute to the ATP site; that span reads GGDS.

Belongs to the phosphoglycerate kinase family. In terms of assembly, monomer.

Its subcellular location is the cytoplasm. The enzyme catalyses (2R)-3-phosphoglycerate + ATP = (2R)-3-phospho-glyceroyl phosphate + ADP. The protein operates within carbohydrate degradation; glycolysis; pyruvate from D-glyceraldehyde 3-phosphate: step 2/5. This Corynebacterium efficiens (strain DSM 44549 / YS-314 / AJ 12310 / JCM 11189 / NBRC 100395) protein is Phosphoglycerate kinase.